The sequence spans 191 residues: Elongation factor P (191 aa).

This sequence belongs to the elongation factor P family.

It localises to the cytoplasm. It participates in protein biosynthesis; polypeptide chain elongation. Its function is as follows. Involved in peptide bond synthesis. Stimulates efficient translation and peptide-bond synthesis on native or reconstituted 70S ribosomes in vitro. Probably functions indirectly by altering the affinity of the ribosome for aminoacyl-tRNA, thus increasing their reactivity as acceptors for peptidyl transferase. The sequence is that of Elongation factor P from Ralstonia pickettii (strain 12J).